The primary structure comprises 89 residues: Small ribosomal subunit protein uS15 (89 aa).

This sequence belongs to the universal ribosomal protein uS15 family. As to quaternary structure, part of the 30S ribosomal subunit. Forms a bridge to the 50S subunit in the 70S ribosome, contacting the 23S rRNA.

Functionally, one of the primary rRNA binding proteins, it binds directly to 16S rRNA where it helps nucleate assembly of the platform of the 30S subunit by binding and bridging several RNA helices of the 16S rRNA. In terms of biological role, forms an intersubunit bridge (bridge B4) with the 23S rRNA of the 50S subunit in the ribosome. The chain is Small ribosomal subunit protein uS15 from Saccharophagus degradans (strain 2-40 / ATCC 43961 / DSM 17024).